The primary structure comprises 420 residues: Zinc finger and BTB domain-containing protein 42 (420 aa).

The region spanning 24–92 (CDCTVLVGDA…MYEGRLDLHN (69 aa)) is the BTB domain. 2 disordered regions span residues 127–204 (TRTL…HPPC) and 222–247 (VKAE…PPPV). Over residues 227–241 (DSFSEQDSSSPQSAD) the composition is skewed to low complexity. 4 consecutive C2H2-type zinc fingers follow at residues 292-314 (CICP…LSAH), 332-354 (PTCP…ERTH), 360-382 (YTCV…AVVH), and 388-411 (HACR…RKFH).

Belongs to the krueppel C2H2-type zinc-finger protein family. ZBTB18 subfamily. As to expression, highly expressed in skeletal muscle and ovary (at protein level). Low expression in brain, lung, spleen, liver and heart (at protein level). Not detected in kidney and intestines (at protein level). Also observed in testis and, at lower levels, in stomach and nervous system.

The protein localises to the cytoplasm. It is found in the nucleus. The protein resides in the nucleoplasm. Transcriptional repressor. Specifically binds DNA and probably acts by recruiting chromatin remodeling multiprotein complexes. The sequence is that of Zinc finger and BTB domain-containing protein 42 (Zbtb42) from Mus musculus (Mouse).